The sequence spans 106 residues: UPF0145 protein PputW619_2377 (106 aa).

The protein belongs to the UPF0145 family.

In Pseudomonas putida (strain W619), this protein is UPF0145 protein PputW619_2377.